We begin with the raw amino-acid sequence, 251 residues long: 2,3-bisphosphoglycerate-dependent phosphoglycerate mutase (251 aa).

Substrate is bound by residues 11 to 18 (RHGESDWN), 24 to 25 (TG), Arg63, 90 to 93 (ERHY), Lys101, 117 to 118 (RR), and 184 to 185 (GN). His12 acts as the Tele-phosphohistidine intermediate in catalysis. Glu90 functions as the Proton donor/acceptor in the catalytic mechanism.

Belongs to the phosphoglycerate mutase family. BPG-dependent PGAM subfamily.

The catalysed reaction is (2R)-2-phosphoglycerate = (2R)-3-phosphoglycerate. Its pathway is carbohydrate degradation; glycolysis; pyruvate from D-glyceraldehyde 3-phosphate: step 3/5. Functionally, catalyzes the interconversion of 2-phosphoglycerate and 3-phosphoglycerate. This Mycobacterium ulcerans (strain Agy99) protein is 2,3-bisphosphoglycerate-dependent phosphoglycerate mutase.